We begin with the raw amino-acid sequence, 142 residues long: Large ribosomal subunit protein uL16 (142 aa).

This sequence belongs to the universal ribosomal protein uL16 family. In terms of assembly, part of the 50S ribosomal subunit.

Binds 23S rRNA and is also seen to make contacts with the A and possibly P site tRNAs. The polypeptide is Large ribosomal subunit protein uL16 (Gemmatimonas aurantiaca (strain DSM 14586 / JCM 11422 / NBRC 100505 / T-27)).